The primary structure comprises 345 residues: NADH-quinone oxidoreductase subunit H (345 aa).

Helical transmembrane passes span 13 to 33 (VLII…LLFL), 84 to 104 (FMLA…VIPF), 115 to 135 (VAIL…IMGG), 161 to 181 (IGLI…SAIV), 190 to 210 (FFSW…ISAL), 248 to 268 (YIAI…GWLS), 278 to 298 (IWMV…KAIV), and 309 to 329 (LGWK…AFAA).

Belongs to the complex I subunit 1 family. NDH-1 is composed of 14 different subunits. Subunits NuoA, H, J, K, L, M, N constitute the membrane sector of the complex.

It localises to the cell inner membrane. It catalyses the reaction a quinone + NADH + 5 H(+)(in) = a quinol + NAD(+) + 4 H(+)(out). In terms of biological role, NDH-1 shuttles electrons from NADH, via FMN and iron-sulfur (Fe-S) centers, to quinones in the respiratory chain. The immediate electron acceptor for the enzyme in this species is believed to be ubiquinone. Couples the redox reaction to proton translocation (for every two electrons transferred, four hydrogen ions are translocated across the cytoplasmic membrane), and thus conserves the redox energy in a proton gradient. This subunit may bind ubiquinone. This chain is NADH-quinone oxidoreductase subunit H, found in Dinoroseobacter shibae (strain DSM 16493 / NCIMB 14021 / DFL 12).